A 144-amino-acid chain; its full sequence is Deoxyuridine 5'-triphosphate nucleotidohydrolase (144 aa).

Substrate is bound by residues 63-65 (RSG), Asn-76, and 80-82 (TID).

It belongs to the dUTPase family. Requires Mg(2+) as cofactor.

The enzyme catalyses dUTP + H2O = dUMP + diphosphate + H(+). Its pathway is pyrimidine metabolism; dUMP biosynthesis; dUMP from dCTP (dUTP route): step 2/2. Its function is as follows. This enzyme is involved in nucleotide metabolism: it produces dUMP, the immediate precursor of thymidine nucleotides and it decreases the intracellular concentration of dUTP so that uracil cannot be incorporated into DNA. This chain is Deoxyuridine 5'-triphosphate nucleotidohydrolase, found in Porphyromonas gingivalis (strain ATCC 33277 / DSM 20709 / CIP 103683 / JCM 12257 / NCTC 11834 / 2561).